The following is a 462-amino-acid chain: MELRLYNTLTRSKDAFRPLDPNLVRLYVCGPTVYDHAHIGNARPVIVFDVLFRLLRRLYGADHVRYVRNITDVDDKINARAAERSISIRELTEETYAWFRDDTAALGCLRPDVEPRATEHILEMQALIERLVASGHAYVAEEHVLFHVPSMPEYGKLSRRPLDEMLNGARVDVAPFKRDPMDFVLWKPSTEGQPGWPSPCGIATPGRPGWHIECSAMSWRHLGETFDIHGGGIDLVFPHHENEIAQSRCAFDSGSMAQVWMHNGFLLVEGEKMSKSLGNFVTIRELLTDWPGEVLRLAMLSTHYRQPINWTRQGIGFAAKTLDKWYRVIGDVEAETGEGNPFESEIADRLGDDLNSPSAITHLHHLADVAEHEDASSALKRRFKSAANLMGLLHETETEWRARQRAAVSVDPDAIAALIADRNAARKARDFATADHIREQLASQGIVLMDNKDGTTSWELTR.

Cysteine 29 provides a ligand contact to Zn(2+). The 'HIGH' region motif lies at 31–41 (PTVYDHAHIGN). Zn(2+)-binding residues include cysteine 214, histidine 239, and glutamate 243. Residues 272 to 276 (KMSKS) carry the 'KMSKS' region motif. Lysine 275 provides a ligand contact to ATP.

This sequence belongs to the class-I aminoacyl-tRNA synthetase family. In terms of assembly, monomer. Requires Zn(2+) as cofactor.

It localises to the cytoplasm. It catalyses the reaction tRNA(Cys) + L-cysteine + ATP = L-cysteinyl-tRNA(Cys) + AMP + diphosphate. This is Cysteine--tRNA ligase from Azorhizobium caulinodans (strain ATCC 43989 / DSM 5975 / JCM 20966 / LMG 6465 / NBRC 14845 / NCIMB 13405 / ORS 571).